A 243-amino-acid polypeptide reads, in one-letter code: UPF0246 protein M6_Spy1787 (243 aa).

It belongs to the UPF0246 family.

The sequence is that of UPF0246 protein M6_Spy1787 from Streptococcus pyogenes serotype M6 (strain ATCC BAA-946 / MGAS10394).